The chain runs to 179 residues: MPLTEVVLVDENDKPTGVMEKQEAHVKGELHRAITVYIFNSRQQLLLQQRAEEKYHSGGLWSNTCCSHPAPGEETLQAAHRRLYEEMGLRCALTPMFTLTYRLQLDNGLIEHELGHVYFGVTDDVPQINPDEVSSYEYQSIDEITQRMMMTPEQFTAWFQLTFARIPDYWQAFKSEQSR.

Mn(2+) contacts are provided by His-25 and His-31. In terms of domain architecture, Nudix hydrolase spans 29 to 161; it reads ELHRAITVYI…PEQFTAWFQL (133 aa). Cys-66 is a catalytic residue. Cys-66 is a binding site for Mg(2+). His-68 serves as a coordination point for Mn(2+). Residue Glu-86 coordinates Mg(2+). Glu-111 and Glu-113 together coordinate Mn(2+). Residue Glu-113 is part of the active site.

It belongs to the IPP isomerase type 1 family. In terms of assembly, homodimer. Mg(2+) is required as a cofactor. Requires Mn(2+) as cofactor.

It is found in the cytoplasm. The catalysed reaction is isopentenyl diphosphate = dimethylallyl diphosphate. Its pathway is isoprenoid biosynthesis; dimethylallyl diphosphate biosynthesis; dimethylallyl diphosphate from isopentenyl diphosphate: step 1/1. Catalyzes the 1,3-allylic rearrangement of the homoallylic substrate isopentenyl (IPP) to its highly electrophilic allylic isomer, dimethylallyl diphosphate (DMAPP). In Pectobacterium atrosepticum (strain SCRI 1043 / ATCC BAA-672) (Erwinia carotovora subsp. atroseptica), this protein is Isopentenyl-diphosphate Delta-isomerase.